The sequence spans 151 residues: Large ribosomal subunit protein bL9 (151 aa).

It belongs to the bacterial ribosomal protein bL9 family.

Functionally, binds to the 23S rRNA. The sequence is that of Large ribosomal subunit protein bL9 from Chlorobium limicola (strain DSM 245 / NBRC 103803 / 6330).